Here is a 76-residue protein sequence, read N- to C-terminus: UPF0248 protein MmarC5_1387 (76 aa).

It belongs to the UPF0248 family.

The polypeptide is UPF0248 protein MmarC5_1387 (Methanococcus maripaludis (strain C5 / ATCC BAA-1333)).